Here is a 526-residue protein sequence, read N- to C-terminus: Probable 1,4-alpha-glucan branching enzyme MT3115 (526 aa).

Residue E205 is the Nucleophile of the active site. Residues R251 and G268 each coordinate substrate. Residue D344 is the Proton donor of the active site. 2 residues coordinate substrate: W396 and D462.

The protein belongs to the glycosyl hydrolase 57 family.

The catalysed reaction is Transfers a segment of a (1-&gt;4)-alpha-D-glucan chain to a primary hydroxy group in a similar glucan chain.. Catalyzes the formation of branch points in alpha-glucans by cleavage of an alpha-1,4 glycosidic bond and subsequent transfer of the cleaved-off oligosaccharide to a new alpha-1,6 position. Is probably involved in the biosynthesis of 6-O-methylglucosyl lipopolysaccharides (MGLP). The chain is Probable 1,4-alpha-glucan branching enzyme MT3115 from Mycobacterium tuberculosis (strain CDC 1551 / Oshkosh).